A 245-amino-acid chain; its full sequence is Bis(5'-nucleosyl)-tetraphosphatase PrpE [asymmetrical] (245 aa).

Belongs to the PrpE family. Ni(2+) is required as a cofactor.

It catalyses the reaction P(1),P(4)-bis(5'-guanosyl) tetraphosphate + H2O = GMP + GTP + 2 H(+). Functionally, asymmetrically hydrolyzes Ap4p to yield AMP and ATP. The protein is Bis(5'-nucleosyl)-tetraphosphatase PrpE [asymmetrical] of Geobacillus thermodenitrificans (strain NG80-2).